A 183-amino-acid polypeptide reads, in one-letter code: Putative manganese efflux pump MntP 1 (183 aa).

The next 6 helical transmembrane spans lie at 6–26 (LFLL…CIGI), 36–56 (MIFV…GGYI), 64–84 (IVPI…ILMI), 100–120 (IMYL…GFTT), 130–150 (LFMS…LGII), and 158–178 (ISII…LFGL).

Belongs to the MntP (TC 9.B.29) family.

It is found in the cell membrane. Functionally, probably functions as a manganese efflux pump. In Clostridium botulinum (strain Hall / ATCC 3502 / NCTC 13319 / Type A), this protein is Putative manganese efflux pump MntP 1.